A 218-amino-acid chain; its full sequence is Thiopurine S-methyltransferase (218 aa).

Residues Trp-10, Leu-45, Glu-66, and Arg-123 each contribute to the S-adenosyl-L-methionine site.

Belongs to the class I-like SAM-binding methyltransferase superfamily. TPMT family.

It is found in the cytoplasm. The catalysed reaction is S-adenosyl-L-methionine + a thiopurine = S-adenosyl-L-homocysteine + a thiopurine S-methylether.. This is Thiopurine S-methyltransferase from Xanthomonas euvesicatoria pv. vesicatoria (strain 85-10) (Xanthomonas campestris pv. vesicatoria).